Here is a 252-residue protein sequence, read N- to C-terminus: tRNA pseudouridine synthase A (252 aa).

The active-site Nucleophile is aspartate 52. Residue tyrosine 111 coordinates substrate.

Belongs to the tRNA pseudouridine synthase TruA family. In terms of assembly, homodimer.

The catalysed reaction is uridine(38/39/40) in tRNA = pseudouridine(38/39/40) in tRNA. Its function is as follows. Formation of pseudouridine at positions 38, 39 and 40 in the anticodon stem and loop of transfer RNAs. In Parabacteroides distasonis (strain ATCC 8503 / DSM 20701 / CIP 104284 / JCM 5825 / NCTC 11152), this protein is tRNA pseudouridine synthase A.